We begin with the raw amino-acid sequence, 488 residues long: MIPVVALVGRPNVGKSTLFNRLTRTRDALVADFPGLTRDRKYGRAFLSGYEFIVVDTGGIDGTEEGIETKMAEQSLAAIEEADVVLFMTDARAGLTAADLSIAQHLRSREKTTFVVANKVDGIDADSACAEFWSLGLGEVYQMAASQGRGVTNMIEYALTPYAEAMGIERQGEEEVVDERQYTEEEAEAEQKRLQDLPIKLAIIGKPNVGKSTLTNRILGEERVVVYDEPGTTRDSIYIPMEREGREYVIIDTAGVRRRSKVHQVIEKFSVIKTLKAVEDANVVLLIIDAREGVAEQDLGLLGFALNAGRALVIAVNKWDGIDQGIKDRVKSELDRRLGFIDFARIHFISALHGTGVGHLFESIEEAYDSATRRVSTSMLTRIMQMSQDDHQPPLVNGRRVKLKYAHVGGYNPPIVVIHGNQVSRLPDSYKRYMMNYFRRSLKVVGTPIQLRFQEGDNPFENKTEKLTMSQERRRKRALSHIKDRKTK.

EngA-type G domains follow at residues 3 to 166 (PVVA…AEAM) and 199 to 372 (IKLA…DSAT). GTP contacts are provided by residues 9–16 (GRPNVGKS), 56–60 (DTGGI), 118–121 (NKVD), 205–212 (GKPNVGKS), 252–256 (DTAGV), and 317–320 (NKWD). Positions 373–457 (RRVSTSMLTR…PIQLRFQEGD (85 aa)) constitute a KH-like domain. Positions 469-488 (MSQERRRKRALSHIKDRKTK) are disordered. The segment covering 473–488 (RRRKRALSHIKDRKTK) has biased composition (basic residues).

Belongs to the TRAFAC class TrmE-Era-EngA-EngB-Septin-like GTPase superfamily. EngA (Der) GTPase family. As to quaternary structure, associates with the 50S ribosomal subunit.

GTPase that plays an essential role in the late steps of ribosome biogenesis. This is GTPase Der from Shewanella sp. (strain W3-18-1).